Here is a 300-residue protein sequence, read N- to C-terminus: 4-hydroxy-tetrahydrodipicolinate synthase (300 aa).

Thr46 contributes to the pyruvate binding site. The active-site Proton donor/acceptor is Tyr135. The active-site Schiff-base intermediate with substrate is Lys163. Position 205 (Val205) interacts with pyruvate.

This sequence belongs to the DapA family. As to quaternary structure, homotetramer; dimer of dimers.

It localises to the cytoplasm. The enzyme catalyses L-aspartate 4-semialdehyde + pyruvate = (2S,4S)-4-hydroxy-2,3,4,5-tetrahydrodipicolinate + H2O + H(+). It functions in the pathway amino-acid biosynthesis; L-lysine biosynthesis via DAP pathway; (S)-tetrahydrodipicolinate from L-aspartate: step 3/4. Its function is as follows. Catalyzes the condensation of (S)-aspartate-beta-semialdehyde [(S)-ASA] and pyruvate to 4-hydroxy-tetrahydrodipicolinate (HTPA). The polypeptide is 4-hydroxy-tetrahydrodipicolinate synthase (Koribacter versatilis (strain Ellin345)).